The following is a 236-amino-acid chain: Protein-L-isoaspartate O-methyltransferase 1 (236 aa).

Residue Ser85 is part of the active site.

The protein belongs to the methyltransferase superfamily. L-isoaspartyl/D-aspartyl protein methyltransferase family.

The protein localises to the cytoplasm. It catalyses the reaction [protein]-L-isoaspartate + S-adenosyl-L-methionine = [protein]-L-isoaspartate alpha-methyl ester + S-adenosyl-L-homocysteine. In terms of biological role, catalyzes the methyl esterification of L-isoaspartyl residues in peptides and proteins that result from spontaneous decomposition of normal L-aspartyl and L-asparaginyl residues. It plays a role in the repair and/or degradation of damaged proteins. The polypeptide is Protein-L-isoaspartate O-methyltransferase 1 (Polaromonas sp. (strain JS666 / ATCC BAA-500)).